Consider the following 440-residue polypeptide: Glycerate 2-kinase (440 aa).

A substrate-binding site is contributed by K58.

It belongs to the glycerate kinase type-1 family. In terms of assembly, homodimer. Mg(2+) is required as a cofactor. Requires Ni(2+) as cofactor. It depends on Mn(2+) as a cofactor. Co(2+) serves as cofactor.

It catalyses the reaction (R)-glycerate + ATP = (2R)-2-phosphoglycerate + ADP + H(+). Its function is as follows. Catalyzes the ATP-dependent phosphorylation of D-glycerate to 2-phosphoglycerate. It can also utilize GTP, CTP, UTP, ADP or pyrophosphate as phosphate donor. This chain is Glycerate 2-kinase (gck), found in Pyrococcus horikoshii (strain ATCC 700860 / DSM 12428 / JCM 9974 / NBRC 100139 / OT-3).